A 348-amino-acid polypeptide reads, in one-letter code: D-alanine--D-alanine ligase (348 aa).

In terms of domain architecture, ATP-grasp spans 132–334; that stretch reads KRVLESADIP…YAELIEELVR (203 aa). 162-217 serves as a coordination point for ATP; the sequence is EAVLSYPVFVKPANMGSSVGISKAESEEELRAAILLALTYDSRILIEQGVLAREIE. Positions 288, 301, and 303 each coordinate Mg(2+).

Belongs to the D-alanine--D-alanine ligase family. Requires Mg(2+) as cofactor. The cofactor is Mn(2+).

It is found in the cytoplasm. The enzyme catalyses 2 D-alanine + ATP = D-alanyl-D-alanine + ADP + phosphate + H(+). It functions in the pathway cell wall biogenesis; peptidoglycan biosynthesis. In terms of biological role, cell wall formation. In Streptococcus equi subsp. zooepidemicus (strain MGCS10565), this protein is D-alanine--D-alanine ligase.